A 139-amino-acid chain; its full sequence is Peptide methionine sulfoxide reductase MsrB (139 aa).

In terms of domain architecture, MsrB spans 8–130 (DREWQRELSP…NSASLQLKTQ (123 aa)). Positions 47, 50, 96, and 99 each coordinate Zn(2+). C119 functions as the Nucleophile in the catalytic mechanism.

It belongs to the MsrB Met sulfoxide reductase family. Zn(2+) is required as a cofactor.

It catalyses the reaction L-methionyl-[protein] + [thioredoxin]-disulfide + H2O = L-methionyl-(R)-S-oxide-[protein] + [thioredoxin]-dithiol. The protein is Peptide methionine sulfoxide reductase MsrB of Acinetobacter baumannii (strain AB307-0294).